Reading from the N-terminus, the 73-residue chain is MTIINSLQSFLNFKKTNNINCSSSLYIDCKNNNIGYSNNNNNNKIYGTNFIAGFDIWIIDNGKTFEPNAGLKL.

This is an uncharacterized protein from Dictyostelium discoideum (Social amoeba).